Here is a 111-residue protein sequence, read N- to C-terminus: Probable 4-amino-4-deoxy-L-arabinose-phosphoundecaprenol flippase subunit ArnE (111 aa).

At Met-1–His-35 the chain is on the cytoplasmic side. The chain crosses the membrane as a helical span at residues Ile-36–Leu-56. Positions Leu-40–Ser-109 constitute an EamA domain. The Periplasmic portion of the chain corresponds to Val-57–Asn-60. A helical membrane pass occupies residues Val-61–Ala-81. Residues Val-82–Glu-87 lie on the Cytoplasmic side of the membrane. The chain crosses the membrane as a helical span at residues Pro-88–Gly-108. The Periplasmic portion of the chain corresponds to Ser-109–Val-111.

It belongs to the ArnE family. In terms of assembly, heterodimer of ArnE and ArnF.

The protein resides in the cell inner membrane. The protein operates within bacterial outer membrane biogenesis; lipopolysaccharide biosynthesis. Its function is as follows. Translocates 4-amino-4-deoxy-L-arabinose-phosphoundecaprenol (alpha-L-Ara4N-phosphoundecaprenol) from the cytoplasmic to the periplasmic side of the inner membrane. This chain is Probable 4-amino-4-deoxy-L-arabinose-phosphoundecaprenol flippase subunit ArnE, found in Escherichia coli (strain UTI89 / UPEC).